A 128-amino-acid polypeptide reads, in one-letter code: Small ribosomal subunit protein uS12 (128 aa).

3-methylthioaspartic acid is present on aspartate 89. The tract at residues 101–128 (SLDTSGVADRRNGRSKYGAKRPKEGAKK) is disordered.

Belongs to the universal ribosomal protein uS12 family. As to quaternary structure, part of the 30S ribosomal subunit. Contacts proteins S8 and S17. May interact with IF1 in the 30S initiation complex.

In terms of biological role, with S4 and S5 plays an important role in translational accuracy. Its function is as follows. Interacts with and stabilizes bases of the 16S rRNA that are involved in tRNA selection in the A site and with the mRNA backbone. Located at the interface of the 30S and 50S subunits, it traverses the body of the 30S subunit contacting proteins on the other side and probably holding the rRNA structure together. The combined cluster of proteins S8, S12 and S17 appears to hold together the shoulder and platform of the 30S subunit. This chain is Small ribosomal subunit protein uS12, found in Chloroherpeton thalassium (strain ATCC 35110 / GB-78).